The chain runs to 528 residues: Glucosidase 2 subunit beta (528 aa).

Positions 1 to 14 are cleaved as a signal peptide; that stretch reads MLLPLLLLLPMCWA. Residue Ser-24 is modified to Phosphoserine; by FAM20C. LDL-receptor class A domains are found at residues 37 to 71 and 72 to 113; these read FTCL…AACP and NGSF…VICE. 2 disulfide bridges follow: Cys-39–Cys-58 and Cys-56–Cys-70. Asp-49 lines the substrate pocket. The Ca(2+) site is built by Gln-50, Asp-53, Tyr-55, Asp-57, Asp-63, and Glu-64. A substrate-binding site is contributed by Asp-53. Asn-72 carries N-linked (GlcNAc...) asparagine glycosylation. 3 disulfides stabilise this stretch: Cys-77/Cys-99, Cys-97/Cys-112, and Cys-100/Cys-116. The residue at position 89 (Ser-89) is a Phosphoserine; by PKC. Ca(2+) contacts are provided by Arg-91, Asp-94, Val-96, Asp-98, Asp-104, and Glu-105. N6-succinyllysine is present on Lys-166. Ser-168 carries the post-translational modification Phosphoserine; by FAM20C. EF-hand domains are found at residues 209–244 and 245–290; these read QEQE…DTDG and DGAL…TDLP. 5 residues coordinate Ca(2+): Asp-222, Asp-224, Asp-226, Thr-228, and Glu-233. 2 disordered regions span residues 234–266 and 281–357; these read LQTH…TDAT and RSEA…DKMP. The span at 247-258 shows a compositional bias: low complexity; it reads ALSEAEAQALLS. A compositionally biased stretch (acidic residues) spans 312-337; sequence TEEEEEEEEEEEEEAEEEEEEEDSEE. Pro residues predominate over residues 338–348; the sequence is APPPLSPPQPA. Phosphoserine; by PKC occurs at positions 383 and 390. The MRH domain maps to 413–514; that stretch reads SQCYELTTNE…ELMTPAACPE (102 aa). The cysteines at positions 415 and 428 are disulfide-linked. Residue Ser-434 is modified to Phosphoserine; by PKC. Cystine bridges form between Cys-471/Cys-500 and Cys-485/Cys-512. Asn-476 carries an N-linked (GlcNAc...) asparagine glycan. The Prevents secretion from ER signature appears at 525 to 528; that stretch reads HDEL.

In terms of assembly, heterodimer of a catalytic alpha subunit (GANAB) and a beta subunit (PRKCSH). Binds glycosylated PTPRC.

It is found in the endoplasmic reticulum. Its pathway is glycan metabolism; N-glycan metabolism. In terms of biological role, regulatory subunit of glucosidase II that cleaves sequentially the 2 innermost alpha-1,3-linked glucose residues from the Glc(2)Man(9)GlcNAc(2) oligosaccharide precursor of immature glycoproteins. Required for efficient PKD1/Polycystin-1 biogenesis and trafficking to the plasma membrane of the primary cilia. The polypeptide is Glucosidase 2 subunit beta (Homo sapiens (Human)).